Here is a 326-residue protein sequence, read N- to C-terminus: Tagatose 1,6-diphosphate aldolase (326 aa).

The protein belongs to the aldolase LacD family.

It catalyses the reaction D-tagatofuranose 1,6-bisphosphate = D-glyceraldehyde 3-phosphate + dihydroxyacetone phosphate. It functions in the pathway carbohydrate metabolism; D-tagatose 6-phosphate degradation; D-glyceraldehyde 3-phosphate and glycerone phosphate from D-tagatose 6-phosphate: step 2/2. This is Tagatose 1,6-diphosphate aldolase from Streptococcus pneumoniae serotype 4 (strain ATCC BAA-334 / TIGR4).